A 445-amino-acid chain; its full sequence is Protein kinase C and casein kinase substrate in neurons protein 1 (445 aa).

The F-BAR domain occupies Asp-12 to Asp-282. Coiled-coil stretches lie at residues Ala-146 to Lys-167 and Thr-183 to Thr-219. The tract at residues Leu-327–Arg-390 is disordered. Polar residues-rich tracts occupy residues Thr-338–Ala-358 and Thr-368–Gly-379. The 60-residue stretch at Ser-386–Val-445 folds into the SH3 domain.

Interacts with cobl.

The protein resides in the cytoplasm. It is found in the cytosol. The protein localises to the cell membrane. It localises to the cell projection. Its subcellular location is the synapse. The protein resides in the synaptosome. It is found in the cytoplasmic vesicle membrane. The protein localises to the ruffle membrane. It localises to the membrane. Its function is as follows. Binds to membranes via its F-BAR domain and mediates membrane tubulation. Plays a role in cellular transport processes by recruiting dynamins to membranes. Plays a role in the reorganization of the actin cytoskeleton and in neuron morphogenesis via its interaction with cobl, and by recruiting cobl to the cell cortex. Plays a role in the regulation of neurite formation, neurite branching and the regulation of neurite length. Required for normal synaptic vesicle endocytosis; this process retrieves previously released neurotransmitters to accommodate multiple cycles of neurotransmission. Required for normal excitatory and inhibitory synaptic transmission. Required for normal embryonic development, including normal development of laterality, normal body size and shape, as well as normal brain and heart development. Required for normal development of stereocilia and kinocilia in sensory hair cells of neuromasts in the posterior lateral line organ, and thus also for balance keeping and normal swimming behavior. The sequence is that of Protein kinase C and casein kinase substrate in neurons protein 1 (pacsin1b) from Danio rerio (Zebrafish).